The chain runs to 527 residues: Berberine bridge enzyme-like 10 (527 aa).

The N-terminal stretch at 1–20 (MEKLLVISLLLLISTSVTTS) is a signal peptide. A disulfide bridge links Cys32 with Cys95. Asn53 is a glycosylation site (N-linked (GlcNAc...) asparagine). One can recognise an FAD-binding PCMH-type domain in the interval 73–248 (TTPKPISVVA…LGYKIQLVPV (176 aa)). Pros-8alpha-FAD histidine is present on His110. Asn137 and Asn293 each carry an N-linked (GlcNAc...) asparagine glycan.

It belongs to the oxygen-dependent FAD-linked oxidoreductase family. The cofactor is FAD.

Its subcellular location is the secreted. It is found in the cell wall. This chain is Berberine bridge enzyme-like 10, found in Arabidopsis thaliana (Mouse-ear cress).